A 2550-amino-acid chain; its full sequence is Highly reducing polyketide synthase otaA (2550 aa).

A Ketosynthase family 3 (KS3) domain is found at 9 to 431 (SEPLAIIGLA…GTNAHAVVED (423 aa)). Catalysis depends on for beta-ketoacyl synthase activity residues Cys182, His317, and His355. Positions 572–894 (FVFTGQGANW…KRYETNGSTI (323 aa)) are malonyl-CoA:ACP transacylase (MAT) domain. The segment at 959 to 1094 (HELLGVPVED…GSVRAETGPP (136 aa)) is N-terminal hotdog fold. The segment at 959–1252 (HELLGVPVED…DLVQLPANND (294 aa)) is dehydratase (DH) domain. The PKS/mFAS DH domain maps to 959-1253 (HELLGVPVED…LVQLPANNDD (295 aa)). A C-terminal hotdog fold region spans residues 1107–1253 (AEPVDIAQMY…LVQLPANNDD (147 aa)). The S-adenosyl-L-methionine site is built by Ile1420 and Glu1442. Residues 1433 to 1612 (HAQTGIKILE…GLRPRLIIND (180 aa)) form a methyltransferase (CMeT) domain region. Residues 1859-1919 (PDEVKIRIHA…DQVMALRTGP (61 aa)) form an enoyl reductase (ER) (ER) domain region. The segment at 2166–2345 (ASYLLIGGFG…PATSVSLGSV (180 aa)) is ketoreductase (KR) domain. The 78-residue stretch at 2454 to 2531 (AAVEVVTRAI…QLAQQAADAS (78 aa)) folds into the Carrier domain. Ser2491 is modified (O-(pantetheine 4'-phosphoryl)serine).

Pantetheine 4'-phosphate is required as a cofactor.

It carries out the reaction 4 malonyl-CoA + acetyl-CoA + 5 NADPH + 9 H(+) = 7-methylmellein + 3 CO2 + 5 NADP(+) + 5 CoA + 4 H2O. It participates in mycotoxin biosynthesis. Functionally, highly reducing polyketide synthase; part of the gene cluster that mediates the biosynthesis of ochratoxin A (OTA), a mycotoxin composed of a chlorinated type I polyketide dihydroisocoumarin moiety linked to L-phenylalanine, and demonstrated to have nephrotoxic, immunotoxic, genotoxic, neurotoxic, and teratogenic properties. OtaA catalyzes the condensation of one acetate and 4 malonate units to form the isocoumarin group. The pathway begins with the highly reducing polyketide synthase otaA that catalyzes the formation of the isocoumarin group during the initial stages of biosynthesis, starting from one acetate and 4 malonate units, to originate the characteristic pentaketide skeleton 7-methylmellein (7-MM) of the OTA molecule. The newly identified cyclase otaY might be involved in the polyketide cyclization reaction during the initial steps of the OTA biosynthesis. 7-MM is then oxidized into 7-carboxymellein (also called ochratoxin beta) by the cytochrome P450 monooxygenase otaC. The NRPS encoded by the otaB gene is involved in the linking of phenylalanine to the dihydroisocoumarin ring. The reaction catalyzed by NRPS results in the production of ochratoxin B (OTB), which is the non-chlorinated analog of OTA and which subsequently serves as the substrate of the halogenase otaD for chlorination activity to form the final molecular structure of OTA, containing a chlorine atom in the C-5 position of the molecule. In Aspergillus niger (strain ATCC MYA-4892 / CBS 513.88 / FGSC A1513), this protein is Highly reducing polyketide synthase otaA.